A 260-amino-acid chain; its full sequence is Taurine import ATP-binding protein TauB (260 aa).

Positions 6–235 constitute an ABC transporter domain; that stretch reads AQQVSVVYAS…RYAHGEPMRS (230 aa). 40–47 lines the ATP pocket; that stretch reads GASGCGKS.

This sequence belongs to the ABC transporter superfamily. Taurine importer (TC 3.A.1.17.1) family. In terms of assembly, the complex is composed of two ATP-binding proteins (TauB), two transmembrane proteins (TauC) and a solute-binding protein (TauA).

It localises to the cell inner membrane. The catalysed reaction is taurine(out) + ATP + H2O = taurine(in) + ADP + phosphate + H(+). Its function is as follows. Part of the ABC transporter complex TauABC involved in taurine import. Responsible for energy coupling to the transport system. The chain is Taurine import ATP-binding protein TauB from Burkholderia pseudomallei (strain 1710b).